Reading from the N-terminus, the 4391-residue chain is Basement membrane-specific heparan sulfate proteoglycan core protein (4391 aa).

The signal sequence occupies residues 1 to 21; sequence MGWRAAGALLLALLLHGRLLA. T42 carries an O-linked (GalNAc...) threonine glycan. S65, S71, and S76 each carry an O-linked (Xyl...) (heparan sulfate) serine glycan. One can recognise an SEA domain in the interval 80-191; that stretch reads QMVYFRALVN…QGFQFRRLGT (112 aa). N89 carries an N-linked (GlcNAc...) asparagine glycan. 4 LDL-receptor class A domains span residues 198–235, 284–320, 324–360, and 367–404; these read ACTE…LNCE, PCGP…LDCG, PCEP…ANCP, and VCGP…FGCM. Disulfide bonds link C199–C212, C206–C225, C219–C234, C285–C297, C292–C310, C304–C319, C325–C337, C332–C350, C344–C359, C368–C381, C375–C394, and C388–C403. The Ig-like C2-type 1 domain maps to 405–504; that stretch reads PPQVVTPPRE…VLELVPQRGP (100 aa). A Laminin EGF-like 1; first part domain is found at 521–530; that stretch reads CFCFGITSVC. The 193-residue stretch at 538–730 folds into the Laminin IV type A 1 domain; the sequence is DQIRLRFDQP…SHGRAHSVEE (193 aa). N554 is a glycosylation site (N-linked (GlcNAc...) asparagine). In terms of domain architecture, Laminin EGF-like 1; second part spans 731 to 763; it reads CRCPIGYSGLSCESCDAHFTRVPGGPYLGTCSG. 11 disulfide bridges follow: C764–C773, C766–C780, C783–C792, C795–C811, C814–C829, C816–C839, C842–C851, C854–C869, C879–C892, C894–C903, and C906–C921. Laminin EGF-like domains follow at residues 764–813 and 814–871; these read CNCN…SCRP and CPCP…KCRP. Positions 879–923 constitute a Laminin EGF-like 4; truncated domain; that stretch reads CDERGSMGTSGEACRCKNNVVGRLCNECADGSFHLSTRNPDGCLK. Residues 924-933 form the Laminin EGF-like 5; first part domain; the sequence is CFCMGVSRHC. One can recognise a Laminin IV type A 2 domain in the interval 941-1125; the sequence is AQLHGASEEP…GQDPALEVEQ (185 aa). The region spanning 1126 to 1158 is the Laminin EGF-like 5; second part domain; sequence CSCPPGYRGPSCQDCDTGYTRTPSGLYLGTCER. 12 disulfide bridges follow: C1159–C1168, C1161–C1175, C1178–C1187, C1190–C1206, C1209–C1224, C1211–C1234, C1237–C1246, C1249–C1263, C1275–C1287, C1277–C1293, C1295–C1304, and C1307–C1322. Laminin EGF-like domains are found at residues 1159–1208, 1209–1265, and 1275–1324; these read CSCH…DCQL, CPCY…PCQR, and CNCD…GCLP. Positions 1325 to 1334 constitute a Laminin EGF-like 9; first part domain; the sequence is CFCMGITQQC. In terms of domain architecture, Laminin IV type A 3 spans 1344–1529; it reads ISTHFAPGDF…NRPRALEVEE (186 aa). In terms of domain architecture, Laminin EGF-like 9; second part spans 1530–1562; it reads CRCPPGYIGLSCQDCAPGYTRTGSGLYLGHCEL. 8 disulfides stabilise this stretch: C1563-C1572, C1565-C1579, C1582-C1591, C1594-C1610, C1613-C1628, C1615-C1638, C1641-C1650, and C1653-C1668. Laminin EGF-like domains lie at 1563–1612 and 1613–1670; these read CECN…DCQP and CACP…QCLP. Ig-like C2-type domains follow at residues 1677 to 1771, 1772 to 1865, 1866 to 1955, 1956 to 2051, 2052 to 2151, 2152 to 2244, 2245 to 2340, 2341 to 2436, 2437 to 2533, 2534 to 2629, 2630 to 2726, 2727 to 2826, 2827 to 2924, 2925 to 3021, 3022 to 3112, 3113 to 3211, 3212 to 3298, 3299 to 3399, 3400 to 3488, 3489 to 3574, and 3575 to 3662; these read LVVE…SKPI, TVTV…TLSA, PVVS…GGGG, PRVQ…ASPP, PVKI…PGST, RPIR…PGPI, PPVR…AGST, QPIR…LGVT, PTVR…QGVA, YPVR…PSVS, PPIR…PGSS, MPIR…PGGA, PPIR…PGLA, QPIY…RLRS, PVIS…HGPP, TVSV…APGA, PQVQ…VESP, PYAT…AGST, PTVQ…ALPS, VLIN…LVQA, and LPQI…PERV. N1755 is a glycosylation site (N-linked (GlcNAc...) asparagine). N-linked (GlcNAc...) asparagine glycosylation occurs at N2121. The tract at residues 2994–3014 is disordered; the sequence is ASGPGPEQEASFTVTVPPSEG. S2995 carries O-linked (Xyl...) (chondroitin sulfate) serine glycosylation. Over residues 3003–3014 the composition is skewed to polar residues; that stretch reads ASFTVTVPPSEG. N-linked (GlcNAc...) asparagine glycans are attached at residues N3072 and N3105. N-linked (GlcNAc...) asparagine glycosylation occurs at N3279. In terms of domain architecture, Laminin G-like 1 spans 3663–3843; it reads VPYFTQTPYS…DLNLTAHGIS (181 aa). 2 N-linked (GlcNAc...) asparagine glycosylation sites follow: N3780 and N3836. 7 cysteine pairs are disulfide-bonded: C3819–C3845, C3848–C3859, C3853–C3869, C3871–C3880, C3888–C3899, C3893–C3910, and C3912–C3921. 2 EGF-like domains span residues 3844–3881 and 3884–3922; these read HCPT…SRCE and QALH…LRCE. Positions 3928–4103 constitute a Laminin G-like 2 domain; the sequence is TTPSLSGAGS…LGSQGIGQCY (176 aa). Residue S3933 is glycosylated (O-linked (Xyl...) (chondroitin sulfate) serine). N4068 carries an N-linked (GlcNAc...) asparagine glycan. Disulfide bonds link C4076/C4102, C4108/C4119, C4113/C4129, C4131/C4140, C4147/C4159, C4153/C4164, and C4166/C4175. 2 EGF-like domains span residues 4104-4141 and 4143-4176; these read DSSP…DLCE and EENP…PRCQ. The mediates motor neuron attachment stretch occupies residues 4149-4151; that stretch reads LRE. 2 O-linked (Xyl...) (chondroitin sulfate) serine glycosylation sites follow: S4179 and S4193. The 189-residue stretch at 4201–4389 folds into the Laminin G-like 3 domain; it reads QYGAYFHDDG…AQAGANTRPC (189 aa). Ca(2+) contacts are provided by D4258 and L4275. The tract at residues 4299-4301 is mediates motor neuron attachment; that stretch reads LRE. Positions 4325 and 4327 each coordinate Ca(2+). C4355 and C4389 are joined by a disulfide. Residues 4364–4391 form a disordered region; it reads ARPGAPPPQPLDLQHRAQAGANTRPCPS.

As to quaternary structure, has a strong tendency to aggregate in dimers or stellate structures. Interacts with other basement membrane components such as laminin, prolargin and collagen type IV. Interacts with COL13A1. Interacts with FGFBP1. Interacts with VWA1. Interacts (via C-terminus) with ECM1 (via C-terminus). Interacts with SVEP1. Proteolytic processing produces the C-terminal angiogenic peptide, endorepellin. This peptide can be further processed to produce the LG3 peptide. In terms of processing, O-glycosylated with core 1 or possibly core 8 glycans. Contains three heparan sulfate chains. Also contains chondroitin sulfate. As to expression, detected in cerebrospinal fluid, fibroblasts and urine (at protein level).

Its subcellular location is the secreted. It localises to the extracellular space. It is found in the extracellular matrix. The protein localises to the basement membrane. Functionally, integral component of basement membranes. Component of the glomerular basement membrane (GBM), responsible for the fixed negative electrostatic membrane charge, and which provides a barrier which is both size- and charge-selective. It serves as an attachment substrate for cells. Plays essential roles in vascularization. Critical for normal heart development and for regulating the vascular response to injury. Also required for avascular cartilage development. In terms of biological role, anti-angiogenic and anti-tumor peptide that inhibits endothelial cell migration, collagen-induced endothelial tube morphogenesis and blood vessel growth in the chorioallantoic membrane. Blocks endothelial cell adhesion to fibronectin and type I collagen. Anti-tumor agent in neovascularization. Interaction with its ligand, integrin alpha2/beta1, is required for the anti-angiogenic properties. Evokes a reduction in phosphorylation of receptor tyrosine kinases via alpha2/beta1 integrin-mediated activation of the tyrosine phosphatase, PTPN6. Its function is as follows. Has anti-angiogenic properties that require binding of calcium ions for full activity. The polypeptide is Basement membrane-specific heparan sulfate proteoglycan core protein (HSPG2) (Homo sapiens (Human)).